A 487-amino-acid polypeptide reads, in one-letter code: Protein nucleotidyltransferase YdiU (487 aa).

ATP-binding residues include G90, G92, R93, K113, D125, G126, R176, and R183. Catalysis depends on D252, which acts as the Proton acceptor. Mg(2+) contacts are provided by N253 and D262. An ATP-binding site is contributed by D262.

The protein belongs to the SELO family. It depends on Mg(2+) as a cofactor. Mn(2+) is required as a cofactor.

The catalysed reaction is L-seryl-[protein] + ATP = 3-O-(5'-adenylyl)-L-seryl-[protein] + diphosphate. It carries out the reaction L-threonyl-[protein] + ATP = 3-O-(5'-adenylyl)-L-threonyl-[protein] + diphosphate. The enzyme catalyses L-tyrosyl-[protein] + ATP = O-(5'-adenylyl)-L-tyrosyl-[protein] + diphosphate. It catalyses the reaction L-histidyl-[protein] + UTP = N(tele)-(5'-uridylyl)-L-histidyl-[protein] + diphosphate. The catalysed reaction is L-seryl-[protein] + UTP = O-(5'-uridylyl)-L-seryl-[protein] + diphosphate. It carries out the reaction L-tyrosyl-[protein] + UTP = O-(5'-uridylyl)-L-tyrosyl-[protein] + diphosphate. In terms of biological role, nucleotidyltransferase involved in the post-translational modification of proteins. It can catalyze the addition of adenosine monophosphate (AMP) or uridine monophosphate (UMP) to a protein, resulting in modifications known as AMPylation and UMPylation. The chain is Protein nucleotidyltransferase YdiU from Ectopseudomonas mendocina (strain ymp) (Pseudomonas mendocina).